Consider the following 408-residue polypeptide: PCI domain-containing protein 2 (408 aa).

At Ala-2 the chain carries N-acetylalanine. Phosphoserine is present on Ser-45. The PCI domain occupies 210–400; it reads VTYRYYVGRK…QKLVVSKQNP (191 aa).

It belongs to the CSN12 family. In terms of assembly, component of the nuclear pore complex (NPC)-associated TREX-2 complex (transcription and export complex 2), composed of at least GANP, 2 copies of ENY2, PCID2, SEM1/DSS1, and either centrin CETN2 or centrin CETN3. The TREX-2 complex also associates with ALYREF/ALY and with the nucleoporin NUP153. Interacts with BRCA2. Interacts with SRCAP chromatin remodeling complex component ZNHIT1; the interaction results in inhibition of SRCAP complex activity, preventing the deposition of histone variant H2AZ1/H2A.Z to lymphoid fate regulator genes and restricting lymphoid lineage commitment.

The protein resides in the cytoplasm. It localises to the nucleus. It is found in the nuclear pore complex. Required for B-cell survival through the regulation of the expression of cell-cycle checkpoint MAD2L1 protein during B cell differentiation. As a component of the TREX-2 complex, involved in the export of mRNAs to the cytoplasm through the nuclear pores. Binds and stabilizes BRCA2 and is thus involved in the control of R-loop-associated DNA damage and transcription-associated genomic instability. Blocks the activity of the SRCAP chromatin remodeling complex by interacting with SRCAP complex member ZNHIT1 and inhibiting its interaction with the complex. This prevents the deposition of histone variant H2AZ1/H2A.Z at the nucleosomes of key lymphoid fate regulator genes which suppresses their expression and restricts lymphoid lineage commitment. The polypeptide is PCI domain-containing protein 2 (PCID2) (Bos taurus (Bovine)).